A 336-amino-acid chain; its full sequence is Torsin-1B (336 aa).

Residues methionine 1 to alanine 24 form the signal peptide. An N-linked (GlcNAc...) asparagine glycan is attached at asparagine 64. Glycine 109–asparagine 116 provides a ligand contact to ATP. The N-linked (GlcNAc...) asparagine glycan is linked to asparagine 165.

The protein belongs to the ClpA/ClpB family. Torsin subfamily. Homohexamer. Interacts with TOR1A; the interaction may be specific of neural tissues. Interacts with TOR1AIP1; TOR1AIP1 is required for TOR1B location on the nuclear membrane. Interacts (ATP-bound) with TOR1AIP2; important for endoplasmic reticulum integrity. N-glycosylated. Widely expressed with low levels in brain.

It is found in the endoplasmic reticulum lumen. The protein localises to the nucleus membrane. It catalyses the reaction ATP + H2O = ADP + phosphate + H(+). Functionally, may serve as a molecular chaperone assisting in the proper folding of secreted and/or membrane proteins. Plays a role in non-neural cells nuclear envelope and endoplasmic reticulum integrity. May have a redundant function with TOR1A in non-neural tissues. The chain is Torsin-1B (TOR1B) from Homo sapiens (Human).